A 270-amino-acid polypeptide reads, in one-letter code: UPF0162 protein VC_2176 (270 aa).

It belongs to the UPF0162 family.

The chain is UPF0162 protein VC_2176 from Vibrio cholerae serotype O1 (strain ATCC 39315 / El Tor Inaba N16961).